The sequence spans 565 residues: Arginine--tRNA ligase (565 aa).

The short motif at Pro-120 to His-130 is the 'HIGH' region element.

The protein belongs to the class-I aminoacyl-tRNA synthetase family. In terms of assembly, monomer.

Its subcellular location is the cytoplasm. It carries out the reaction tRNA(Arg) + L-arginine + ATP = L-arginyl-tRNA(Arg) + AMP + diphosphate. The protein is Arginine--tRNA ligase of Clostridium perfringens (strain 13 / Type A).